The primary structure comprises 72 residues: Mitochondrial import receptor subunit TOM7-1 (72 aa).

At 2–41 (LKPKGKNTKKAAAADEDDGAVAVVGKFVKEWGTWTAKKAK) the chain is on the cytoplasmic side. The chain crosses the membrane as a helical span at residues 42-59 (VITHYGFIPLVIIIGMNS). The Mitochondrial intermembrane segment spans residues 60 to 72 (EPKPSLSQLLSPV).

Belongs to the Tom7 family. Forms part of the preprotein translocase complex of the outer mitochondrial membrane (TOM complex).

It is found in the mitochondrion outer membrane. Its function is as follows. Seems to act as a modulator of the dynamics of the mitochondrial protein transport machinery. Seems to promote the dissociation of subunits of the outer membrane translocase. The polypeptide is Mitochondrial import receptor subunit TOM7-1 (TOM7-1) (Solanum tuberosum (Potato)).